The chain runs to 324 residues: dITP/XTP pyrophosphatase (324 aa).

The segment at 1–126 (MTKSIFEYKD…SDNKSDFGDV (126 aa)) is unknown. An NTP pyrophosphatase region spans residues 127–324 (LLIATRNEGK…EVFPAWQNKQ (198 aa)). 131 to 136 (TRNEGK) contacts substrate. Residue aspartate 193 is the Proton acceptor of the active site. Aspartate 193 contributes to the Mg(2+) binding site. Substrate-binding positions include serine 194, 277-280 (FGYD), lysine 300, and 305-306 (HR).

It belongs to the HAM1 NTPase family. In terms of assembly, homodimer. It depends on Mg(2+) as a cofactor.

It catalyses the reaction XTP + H2O = XMP + diphosphate + H(+). The catalysed reaction is dITP + H2O = dIMP + diphosphate + H(+). It carries out the reaction ITP + H2O = IMP + diphosphate + H(+). Its function is as follows. Pyrophosphatase that catalyzes the hydrolysis of nucleoside triphosphates to their monophosphate derivatives, with a high preference for the non-canonical purine nucleotides XTP (xanthosine triphosphate), dITP (deoxyinosine triphosphate) and ITP. Seems to function as a house-cleaning enzyme that removes non-canonical purine nucleotides from the nucleotide pool, thus preventing their incorporation into DNA/RNA and avoiding chromosomal lesions. The sequence is that of dITP/XTP pyrophosphatase from Streptococcus thermophilus (strain ATCC BAA-250 / LMG 18311).